The following is a 392-amino-acid chain: Galactokinase (392 aa).

Alpha-D-galactose-binding residues include arginine 37, glutamate 43, histidine 44, and aspartate 46. The ATP site is built by glycine 136, glycine 138, serine 140, and serine 141. Aspartate 186 contacts alpha-D-galactose. Aspartate 186 functions as the Proton acceptor in the catalytic mechanism. The residue at position 230 (serine 230) is a Phosphoserine. An alpha-D-galactose-binding site is contributed by tyrosine 236.

Belongs to the GHMP kinase family. GalK subfamily. Homodimer.

It catalyses the reaction alpha-D-galactose + ATP = alpha-D-galactose 1-phosphate + ADP + H(+). It functions in the pathway carbohydrate metabolism; galactose metabolism. In terms of biological role, catalyzes the transfer of a phosphate from ATP to alpha-D-galactose and participates in the first committed step in the catabolism of galactose. This is Galactokinase from Homo sapiens (Human).